The sequence spans 168 residues: CASP-like protein UU-1 (168 aa).

The Cytoplasmic portion of the chain corresponds to 1–17; it reads MVELESQEAVTVASTAD. The chain crosses the membrane as a helical span at residues 18-38; that stretch reads IAVDVSLRLLAAATSLAAAVV. Residues 39 to 54 lie on the Extracellular side of the membrane; that stretch reads VAANHQQRWGIRVDFT. A helical transmembrane segment spans residues 55 to 75; sequence LFQVWIGFVAVNLVCTVYAAA. At 76–95 the chain is on the cytoplasmic side; that stretch reads TAAAAARKAMGRWWLHHADA. The chain crosses the membrane as a helical span at residues 96–116; that stretch reads VVVNLEAAATAGAGAIGSIAM. The Extracellular portion of the chain corresponds to 117 to 136; it reads WGNEASGWYAVCRLYRRYCN. The chain crosses the membrane as a helical span at residues 137–157; sequence AGAAALALSLAAVLLLGVACA. The Cytoplasmic segment spans residues 158–168; that stretch reads RSRYPKMPPTT.

Belongs to the Casparian strip membrane proteins (CASP) family. As to quaternary structure, homodimer and heterodimers.

The protein resides in the cell membrane. The polypeptide is CASP-like protein UU-1 (Oryza sativa subsp. japonica (Rice)).